Reading from the N-terminus, the 156-residue chain is Small ribosomal subunit protein uS7 (156 aa).

It belongs to the universal ribosomal protein uS7 family. In terms of assembly, part of the 30S ribosomal subunit. Contacts proteins S9 and S11.

Functionally, one of the primary rRNA binding proteins, it binds directly to 16S rRNA where it nucleates assembly of the head domain of the 30S subunit. Is located at the subunit interface close to the decoding center, probably blocks exit of the E-site tRNA. This Micrococcus luteus (strain ATCC 4698 / DSM 20030 / JCM 1464 / CCM 169 / CCUG 5858 / IAM 1056 / NBRC 3333 / NCIMB 9278 / NCTC 2665 / VKM Ac-2230) (Micrococcus lysodeikticus) protein is Small ribosomal subunit protein uS7.